The primary structure comprises 331 residues: GTP 3',8-cyclase (331 aa).

The Radical SAM core domain occupies 6–231 (PFGRTISYLR…TDIPFKTGGP (226 aa)). GTP is bound at residue Arg-15. [4Fe-4S] cluster contacts are provided by Cys-22 and Cys-26. Residue Tyr-28 participates in S-adenosyl-L-methionine binding. Cys-29 is a [4Fe-4S] cluster binding site. Arg-64 serves as a coordination point for GTP. Gly-68 serves as a coordination point for S-adenosyl-L-methionine. Thr-98 serves as a coordination point for GTP. S-adenosyl-L-methionine is bound at residue Ser-122. Lys-158 provides a ligand contact to GTP. Met-192 is a binding site for S-adenosyl-L-methionine. The [4Fe-4S] cluster site is built by Cys-255 and Cys-258. 260-262 (RVR) provides a ligand contact to GTP. Cys-272 serves as a coordination point for [4Fe-4S] cluster.

The protein belongs to the radical SAM superfamily. MoaA family. As to quaternary structure, monomer and homodimer. [4Fe-4S] cluster serves as cofactor.

It carries out the reaction GTP + AH2 + S-adenosyl-L-methionine = (8S)-3',8-cyclo-7,8-dihydroguanosine 5'-triphosphate + 5'-deoxyadenosine + L-methionine + A + H(+). It participates in cofactor biosynthesis; molybdopterin biosynthesis. Catalyzes the cyclization of GTP to (8S)-3',8-cyclo-7,8-dihydroguanosine 5'-triphosphate. The protein is GTP 3',8-cyclase of Mesorhizobium japonicum (strain LMG 29417 / CECT 9101 / MAFF 303099) (Mesorhizobium loti (strain MAFF 303099)).